The primary structure comprises 265 residues: Pyrroline-5-carboxylate reductase (265 aa).

It belongs to the pyrroline-5-carboxylate reductase family.

Its subcellular location is the cytoplasm. It catalyses the reaction L-proline + NADP(+) = (S)-1-pyrroline-5-carboxylate + NADPH + 2 H(+). The catalysed reaction is L-proline + NAD(+) = (S)-1-pyrroline-5-carboxylate + NADH + 2 H(+). It functions in the pathway amino-acid biosynthesis; L-proline biosynthesis; L-proline from L-glutamate 5-semialdehyde: step 1/1. Catalyzes the reduction of 1-pyrroline-5-carboxylate (PCA) to L-proline. In Aquifex aeolicus (strain VF5), this protein is Pyrroline-5-carboxylate reductase.